A 419-amino-acid polypeptide reads, in one-letter code: UDP-N-acetylglucosamine 1-carboxyvinyltransferase 2 (419 aa).

22–23 (KN) is a phosphoenolpyruvate binding site. Arg92 is a binding site for UDP-N-acetyl-alpha-D-glucosamine. Cys116 functions as the Proton donor in the catalytic mechanism. Cys116 is modified (2-(S-cysteinyl)pyruvic acid O-phosphothioketal). UDP-N-acetyl-alpha-D-glucosamine contacts are provided by residues 121–125 (RPIDL), Asp306, and Ile328.

Belongs to the EPSP synthase family. MurA subfamily.

Its subcellular location is the cytoplasm. It carries out the reaction phosphoenolpyruvate + UDP-N-acetyl-alpha-D-glucosamine = UDP-N-acetyl-3-O-(1-carboxyvinyl)-alpha-D-glucosamine + phosphate. The protein operates within cell wall biogenesis; peptidoglycan biosynthesis. Functionally, cell wall formation. Adds enolpyruvyl to UDP-N-acetylglucosamine. In Streptococcus pneumoniae (strain ATCC BAA-255 / R6), this protein is UDP-N-acetylglucosamine 1-carboxyvinyltransferase 2.